A 783-amino-acid polypeptide reads, in one-letter code: Zinc finger protein 107 (783 aa).

The segment at 76–98 (FQCNKYVKVFDKFSNSNRYKRRH) adopts a C2H2-type 1; atypical zinc-finger fold. C2H2-type zinc fingers lie at residues 104–126 (FKCK…RRIH), 132–154 (YKCE…KRIH), and 160–182 (YKCE…KIIH). Lys186 is covalently cross-linked (Glycyl lysine isopeptide (Lys-Gly) (interchain with G-Cter in SUMO2)). The C2H2-type 5 zinc finger occupies 188 to 210 (NKCEECGKAFKQASHLTIHKIIH). A C2H2-type 6; atypical zinc finger spans residues 216 to 238 (YKYEECGKVFSQSSHLTTQKILH). Residues 244 to 266 (YKCKECGKAFNLFSNLTNHKRIH) form a C2H2-type 7 zinc finger. The C2H2-type 8; atypical zinc finger occupies 272–294 (YKCKECGRAFNISSNLNKQEKIH). A C2H2-type 9; atypical zinc finger spans residues 300–322 (NKCEECDKAFNRSLKLTAHKKIL). C2H2-type zinc fingers lie at residues 328 to 350 (YKCE…KIIH) and 356 to 378 (YKCK…KKIH). The C2H2-type 12; atypical zinc finger occupies 384 to 406 (YKCEECGKAFNQHSNLINHRKIY). C2H2-type zinc fingers lie at residues 412–434 (YKCE…KKIH), 440–462 (YKCE…KKIH), 468–490 (YKCE…KRIH), and 496–518 (YKCE…KIVH). Residues 524 to 546 (NKCEEFGKAFKQSSHRTIHKIIH) form a C2H2-type 17; atypical zinc finger. The segment at 552 to 574 (YKCEEHGKVFNQSSNLTTQKIIH) adopts a C2H2-type 18; atypical zinc-finger fold. The C2H2-type 19; atypical zinc-finger motif lies at 580–602 (YKFEEHGKAFNLFSNITNHKIIY). 5 C2H2-type zinc fingers span residues 608–630 (HKCE…KRIH), 636–658 (YQCA…KIIH), 664–686 (YKCK…KKIH), 692–714 (YKCE…KKIH), and 720–742 (YKCE…KIIH). The C2H2-type 25; atypical zinc-finger motif lies at 748-770 (YKCGDYGRAFNLSSNLTTHKKIH).

Belongs to the krueppel C2H2-type zinc-finger protein family. Expressed in brain, heart, skeletal muscle, kidney and pancreas. Weakly expressed in aorta, liver and lung.

Its subcellular location is the nucleus. May be involved in transcriptional regulation. The polypeptide is Zinc finger protein 107 (ZNF107) (Homo sapiens (Human)).